A 755-amino-acid polypeptide reads, in one-letter code: Polyribonucleotide nucleotidyltransferase (755 aa).

Mg(2+) contacts are provided by aspartate 545 and aspartate 551. The KH domain maps to 611-670; the sequence is PRITAITVPVNKIGEVIGPKGKTINSITEETGANISIEEDGTVYVSAASGAAAEAAIEKI. In terms of domain architecture, S1 motif spans 682–751; that stretch reads GERFLGTVVK…NRGKISLAPV (70 aa).

Belongs to the polyribonucleotide nucleotidyltransferase family. It depends on Mg(2+) as a cofactor.

It is found in the cytoplasm. The catalysed reaction is RNA(n+1) + phosphate = RNA(n) + a ribonucleoside 5'-diphosphate. In terms of biological role, involved in mRNA degradation. Catalyzes the phosphorolysis of single-stranded polyribonucleotides processively in the 3'- to 5'-direction. This is Polyribonucleotide nucleotidyltransferase from Corynebacterium diphtheriae (strain ATCC 700971 / NCTC 13129 / Biotype gravis).